A 2036-amino-acid polypeptide reads, in one-letter code: MQNDEEPAAAAGTSGLSNGESLRSPPAPAPRRPKPGILRLDIGKPRRSSGGSVDFRCVGSSSSNGNTSNVATGANSENNSGVTSPHQLSVTWAPPCDLDRGGWQMQSSADAKREFYKGQRGRRAASQEDHRSYELNDFPLQNQSSDAESCHQEPHFAHQRSPGIGFDEDGGGGDIDDEESYTISVSAIMQRRASVRGYRGKRGSRSSRRASSPMDHVLDSVERRRSSVYTTSSEEGTNQESTQEQIFENIRLHKEVIQSVKLQPWPIRKKLKLVRQAKTYVARHEGALQERFAMSRSTRDLWARFKILMAARWRHWKRETASFLTVLIPWELRIKEIESHFGSGVASYFTFLRWLMWVNIMIAIPLVAFVIGPEYFATKHGETDPRKRMSDPEARVAGNLFTFWEFEGYLKYSPMFYGYYSSTSGISTSGYKLPLAYFLTAVLVYIYSFVATLRKMAENSRNSKLSSKDDECVFSWKLFTGWDFMIGHAETAHNRIASVVVGFKEALLEEAEKKKDNRNWRVILQRILVNILVMGLLGLSGATVVLLVNHSEDLAKHDNWLSRNAVNVTMTLLSFFLPMIFEALGLFENWHPRQQLRLQLARIMILNMLNLYSLMFSFIYKINSKEKPLQMLKLENETNTMELKNLLSSIEALRAMTPTTSLYGESTSDGLFDDSTSTATWGEDGGGLFSTTAAAALISTTVQRLKCYNMTVKCSKLRRNIISGKHLATTLMVLNLTTPAMVPPTLPTTLPTTFPTTLPTTLPTTLPTALPTTLPTTLPTTLPSTLATTTATTSSIWSTTEETSPTTTTTSPWTTLPPSTTTTEATTTTERATTTTEATSTTTLKITTAEINSTLSDTTKPLGKSIDTEIPNSTTNSATLSTIPATLNTTNLPLNSTTKLTTTTSTEKPQGEDNFIYTTGEDEGSYDYGSDSTSDAPDNNSYSDITDYSSEPSEIEDFDEQESTDQADDPLAKVLEQLDENETKGRRKRALAESPFFTSKYSRRHRNESAVSAGQPRETTESVNATPSRWPFNWASFRQTTPRTTTTRRVPSGILTKEEWERLRRLRGRITTTTSTSTTSTTTRRPRWRYRTTTTELTSTTEEESSTTESSTDSSSPGSTTNAFDSSSSTTEEDEYTTTEGSENRPYYVGYVDISEMGSTIYYDGDSEFLEECVITICPKGDDFFGSTTESPDSTTQSSDSKQLTTVKLTPLERKQKRLKEVQLAIKQIQTNLTTMCWETSLGQELSKVIVFDGLMSIVAPLCIDFLRALFVRYVNQNWCWDMEKTFPQYGDFKIAENILTLINNQGQVWMGIFFSPGLVLINLVKLMIMMYFRSWIVLTCNVPHEVVFKASKSNNFYLSLLLTMLFLCVLPVGYAIVWLRPSWHCGPFSEYNRIAEFITNTTRNALPKQLHEPLDYLTSSSTVIPLLLLLILIIYYLVSLTGALREANQDLRTQLQKEREEERKKIFKVPEVKQAEPTATTLTNRWRKVLEASSPVTPTQPPDFDTEEYKNQARKELISRIMKKALRKGSATSDEDSFVRRDDDDTDTEHQDSLPHDEEAKDKRFGLSRLQQIRRTRKPSLVDIVQIAKQERARAGSIVAGTSSSGTGNFPIKETHPKSRFKVEKHERKDRGSMKDKKDTRHRQSPQQQQQPPPYESPKDNEHDPDTNSRIVSASLLRRHKEQAEGEEPPTTPDAPQTPNSPVEPVEQALEESTPETPTLAKSKFHIVDEKKPPPHEVEDKPLPTPKESGSGGGSLGKFKFRKHKFKSNNVAAVKPEPEVFKFDERSVERSSDVPATHAAEYLNNEPSGTEEQDRSLPSPTPSQGQGHHQRQLSVLSRQGRKKIGNLLALVREAVNLKKDDVEQAGSDESPGPTTPTYLAYTPPPPPSVLSSVSSSTALEMPPTPEPESPTPSAPLHFGSSTSSRAPSKPPKPPMVPASATAPTATMDDLEELDTAGPITFPRRSDSHRRRTMRQDSQSSIWSDNIPTITISTTGSDECIVDAAAPQNGLPDPRSASPEPTVNIIRIDIENEHEK.

Disordered regions lie at residues 1–178 and 194–243; these read MQND…IDDE and SVRG…ESTQ. The Cytoplasmic portion of the chain corresponds to 1–353; sequence MQNDEEPAAA…GVASYFTFLR (353 aa). The span at 58 to 73 shows a compositional bias: low complexity; sequence VGSSSSNGNTSNVATG. Polar residues predominate over residues 74 to 90; it reads ANSENNSGVTSPHQLSV. A compositionally biased stretch (basic and acidic residues) spans 125-134; the sequence is ASQEDHRSYE. The span at 166-178 shows a compositional bias: acidic residues; it reads FDEDGGGGDIDDE. Basic residues predominate over residues 198–208; it reads YRGKRGSRSSR. Residues 216-225 show a composition bias toward basic and acidic residues; sequence HVLDSVERRR. Residues 227–243 show a composition bias toward polar residues; it reads SVYTTSSEEGTNQESTQ. A helical membrane pass occupies residues 354 to 374; sequence WLMWVNIMIAIPLVAFVIGPE. Residues 375-395 lie on the Extracellular side of the membrane; it reads YFATKHGETDPRKRMSDPEAR. Residues 396-418 traverse the membrane as a helical segment; the sequence is VAGNLFTFWEFEGYLKYSPMFYG. Over 419-432 the chain is Cytoplasmic; the sequence is YYSSTSGISTSGYK. A helical transmembrane segment spans residues 433–453; sequence LPLAYFLTAVLVYIYSFVATL. Residues 454–526 are Extracellular-facing; it reads RKMAENSRNS…NRNWRVILQR (73 aa). A helical transmembrane segment spans residues 527–547; that stretch reads ILVNILVMGLLGLSGATVVLL. The Cytoplasmic portion of the chain corresponds to 548-567; that stretch reads VNHSEDLAKHDNWLSRNAVN. A helical transmembrane segment spans residues 568-588; the sequence is VTMTLLSFFLPMIFEALGLFE. The Extracellular portion of the chain corresponds to 589–599; that stretch reads NWHPRQQLRLQ. A helical membrane pass occupies residues 600–620; that stretch reads LARIMILNMLNLYSLMFSFIY. Residues 621-1308 lie on the Cytoplasmic side of the membrane; sequence KINSKEKPLQ…ILTLINNQGQ (688 aa). 5 disordered regions span residues 789–839, 860–967, 996–1027, 1066–1143, and 1186–1205; these read TTAT…TEAT, KPLG…TDQA, FFTS…NATP, LRGR…EGSE, and GSTT…KQLT. Polar residues predominate over residues 870–885; the sequence is IPNSTTNSATLSTIPA. The segment covering 886–906 has biased composition (low complexity); the sequence is TLNTTNLPLNSTTKLTTTTST. Over residues 933-952 the composition is skewed to polar residues; that stretch reads TSDAPDNNSYSDITDYSSEP. Acidic residues predominate over residues 953–967; the sequence is SEIEDFDEQESTDQA. Low complexity-rich tracts occupy residues 1069–1083, 1091–1100, and 1107–1130; these read RITT…STTT, RTTTTELTST, and TTES…SSST. Residues 1309-1329 traverse the membrane as a helical segment; it reads VWMGIFFSPGLVLINLVKLMI. The Extracellular segment spans residues 1330-1358; sequence MMYFRSWIVLTCNVPHEVVFKASKSNNFY. Residues 1359–1379 traverse the membrane as a helical segment; it reads LSLLLTMLFLCVLPVGYAIVW. Over 1380-1423 the chain is Cytoplasmic; that stretch reads LRPSWHCGPFSEYNRIAEFITNTTRNALPKQLHEPLDYLTSSST. A helical transmembrane segment spans residues 1424–1444; it reads VIPLLLLLILIIYYLVSLTGA. Residues 1445–2036 lie on the Extracellular side of the membrane; that stretch reads LREANQDLRT…RIDIENEHEK (592 aa). Disordered stretches follow at residues 1527-1572, 1592-1841, and 1859-1990; these read LRKG…SRLQ, ERAR…SRQG, and KKDD…IPTI. Composition is skewed to basic and acidic residues over residues 1538–1566, 1614–1640, 1658–1668, 1727–1743, and 1777–1793; these read SFVR…DKRF, KETH…DKKD, SPKDNEHDPDT, HIVD…EDKP, and PEPE…ERSS. The span at 1806-1838 shows a compositional bias: polar residues; the sequence is NEPSGTEEQDRSLPSPTPSQGQGHHQRQLSVLS. The segment covering 1890–1899 has biased composition (low complexity); it reads VLSSVSSSTA. Pro residues predominate over residues 1903-1914; sequence PPTPEPESPTPS. The span at 1976-1990 shows a compositional bias: polar residues; the sequence is QDSQSSIWSDNIPTI.

This sequence belongs to the TMC family. Expressed in multi-dendritic neurons of the labellum (md-L), which extend elaborate dendritic arbors innervating the bases of taste hairs (at protein level). In larvae, expressed in class I and class II dendritic arborization (da) neurons and bipolar dendrite (bd) neurons (at protein level). In adults, expressed in various sensory neurons including those in the mouth parts, olfactory neurons in the antenna, wing bristle neurons, haltere neurons, arista neurons, and many other sensory neurons, including a subset of chordotonal (Cho) neurons. Expressed in md-L axon terminals, including those that project into the subesophageal zone (SEZ). Also expressed in a small number of local neurons in the adult ventral nerve cord (VNC), and projections extending from a few neurons in the legs or wing hinges. In the adult mouth, expressed in a few multi-dendritic neurons of the ventral cibarial sensory organ (VCSO); the multiple elaborate dendritic branches form a brush-like structure that faces the luminal side of the food-passing tunnel. Also expressed in the oviduct and uterus of adult females.

The protein localises to the cell membrane. It localises to the cell projection. It is found in the dendrite. In terms of biological role, probable ion channel. Component of mechanosensitive neurons that participates in proprioception, sensing food texture, and directing egg-laying site selection (oviposition). Component of multi-dendritic neurons of the labellum (md-L) where it is required for sensing the hardness and viscosity of their food, enabling them to behaviorally discriminate their preferred softness and smoothness from harder and stickier food options. Required as part of oviposition site selection process to relay mechanosensory and chemosensory information on the hardness and sweetness of potential egg-laying substrates, thus ensuring females select the most optimal site for their eggs survival. Females determine the softest substrate for their eggs first by making a coarse evaluation of substrate hardness using mechanosensitive channels nan and Piezo in the leg tarsal bristles, followed by a much finer assessment using nan, iav and Tmc mechanosensitive channels on the labellum. This protein is required to sense subtle differences in substrate stiffness (between 0.25% and 0.3% agarose), likely acting in the md-L neurons. Also required in neurons on the labellum, including the md-Ls, and possibly in the brain, to inhibit discrimination of egg-laying substrates of different hardness if the substrate contains sucrose. During oviposition evaluation, activation of sweet neurons by sucrose enhances the activity of the Tmc neurons resulting in females losing their softness preference in favor of egg-laying sites that contain sucrose. Acts in the larvae peripheral sensory neurons, to contribute to proprioception and sensory feedback for normal forward crawling behavior. Required for the normal activity of the proprioceptive sensory dendrites, ddaE which show preferential responses to forward locomotion, and ddaD which show preferential responses to backward locomotion. This chain is Transmembrane channel-like protein, found in Drosophila melanogaster (Fruit fly).